A 100-amino-acid polypeptide reads, in one-letter code: Sec-independent protein translocase protein TatA (100 aa).

Residues 1-21 traverse the membrane as a helical segment; it reads MGALRPWHIAVLVVVLILLFG. Positions 46-58 are enriched in basic and acidic residues; it reads LHDDDRDLAEKAD. Residues 46–100 form a disordered region; sequence LHDDDRDLAEKADAQAGYQPMPPQVQQGQHPQQSPYPAPPQQQPVVDPVQRTRDS. Positions 69–78 are enriched in low complexity; it reads QVQQGQHPQQ.

Belongs to the TatA/E family. As to quaternary structure, the Tat system comprises two distinct complexes: a TatABC complex, containing multiple copies of TatA, TatB and TatC subunits, and a separate TatA complex, containing only TatA subunits. Substrates initially bind to the TatABC complex, which probably triggers association of the separate TatA complex to form the active translocon.

Its subcellular location is the cell membrane. Its function is as follows. Part of the twin-arginine translocation (Tat) system that transports large folded proteins containing a characteristic twin-arginine motif in their signal peptide across membranes. TatA could form the protein-conducting channel of the Tat system. The sequence is that of Sec-independent protein translocase protein TatA from Salinispora tropica (strain ATCC BAA-916 / DSM 44818 / JCM 13857 / NBRC 105044 / CNB-440).